The primary structure comprises 727 residues: Elongation factor 2 (727 aa).

Residues 19–260 (DQIRNMGICA…MAIKHLPNPL (242 aa)) enclose the tr-type G domain. Residues 28-35 (AHIDHGKT), 94-98 (DTPGH), and 148-151 (NKVD) each bind GTP. Residue H603 is modified to Diphthamide.

The protein belongs to the TRAFAC class translation factor GTPase superfamily. Classic translation factor GTPase family. EF-G/EF-2 subfamily.

It is found in the cytoplasm. In terms of biological role, catalyzes the GTP-dependent ribosomal translocation step during translation elongation. During this step, the ribosome changes from the pre-translocational (PRE) to the post-translocational (POST) state as the newly formed A-site-bound peptidyl-tRNA and P-site-bound deacylated tRNA move to the P and E sites, respectively. Catalyzes the coordinated movement of the two tRNA molecules, the mRNA and conformational changes in the ribosome. This is Elongation factor 2 (fusA) from Methanococcus vannielii (strain ATCC 35089 / DSM 1224 / JCM 13029 / OCM 148 / SB).